Reading from the N-terminus, the 588-residue chain is DELLA protein GAI (588 aa).

Residues 1-15 (MKRDRDRDREREKRA) show a composition bias toward basic and acidic residues. Residues 1-38 (MKRDRDRDREREKRAFSNGAVSSGKSKIWEEDEEEKPD) are disordered. Positions 42–46 (DELLA) match the DELLA motif motif. A disordered region spans residues 152–177 (GAVFNSDSNKRHRSTTSSFSTTSSSM). Over residues 166–177 (TTSSFSTTSSSM) the composition is skewed to low complexity. The 385-residue stretch at 190–574 (VDSQETGVRL…RPLIATSAWK (385 aa)) folds into the GRAS domain. Positions 197–251 (VRLVHTLMACAEAVQQENLTLADQLVRHIGILAVSQSGAMRKVATYFAEALARRI) are leucine repeat I (LRI). The segment at 269–334 (QMHFYETCPY…GGPPAFRLTG (66 aa)) is VHIID. Residues 300 to 304 (VHVID) carry the VHIID motif. The tract at residues 348-380 (QVGWKLAQLAETIGVEFEFRGFVANSLADLDAT) is leucine repeat II (LRII). The interval 392 to 495 (VAINSVFELH…EVYLGRQICN (104 aa)) is PFYRE. Positions 400-404 (LHRLL) match the LXXLL motif motif. Residues 498 to 574 (ACEGSDRVER…RPLIATSAWK (77 aa)) form an SAW region.

Belongs to the GRAS family. DELLA subfamily. Phosphorylated. Post-translationally, ubiquitinated. Upon GA application it is ubiquitinated, leading to its subsequent degradation. In terms of tissue distribution, expressed in both vegetative and reproductive tissues.

The protein localises to the nucleus. Probable transcriptional regulator that acts as a repressor of the gibberellin (GA) signaling pathway. Probably acts by participating in large multiprotein complexes that repress transcription of GA-inducible genes. Upon GA application, it is degraded by the proteasome, allowing the GA signaling pathway. Its degradation is not essential for germination. The sequence is that of DELLA protein GAI (GAI) from Solanum lycopersicum (Tomato).